Here is a 282-residue protein sequence, read N- to C-terminus: Protein canopy homolog 3 (282 aa).

Residues 1–33 (MEPLPEPASGPRPRPHRLLLLSLLLLLLPLLPA) form the signal peptide. One can recognise a Saposin B-type domain in the interval 53–275 (SKCEVCKYVA…EGIQKASPLT (223 aa)). 3 disulfide bridges follow: Cys-55–Cys-212, Cys-58–Cys-200, and Cys-110–Cys-172. Asn-159 carries an N-linked (GlcNAc...) asparagine glycan. Residues 159–185 (NETSAEVADLKKQCDVLVEEFEEVIED) adopt a coiled-coil conformation. The tract at residues 221–282 (KGDTAALGGK…PLTHSPPDEL (62 aa)) is disordered. The span at 255–266 (DLDGDPSPEEDE) shows a compositional bias: acidic residues.

It belongs to the canopy family. Interacts with HSP90B1; this interaction is disrupted in the presence of ATP. Interacts with TLR1, TLR2, TLR4 and TLR9.

The protein localises to the endoplasmic reticulum. Its function is as follows. Toll-like receptor (TLR)-specific co-chaperone for HSP90B1. Required for proper TLR folding, except that of TLR3, and hence controls TLR exit from the endoplasmic reticulum. Consequently, required for both innate and adaptive immune responses. The sequence is that of Protein canopy homolog 3 (CNPY3) from Bos taurus (Bovine).